Reading from the N-terminus, the 71-residue chain is Protein cef (71 aa).

Plays a role in the processing of a cluster of viral tRNAs. This is Protein cef (cef) from Escherichia coli (Bacteriophage T4).